Consider the following 115-residue polypeptide: Class I hydrophobin 21 (115 aa).

Residues 1–20 (MFAAPATMLVLAALAALSSA) form the signal peptide. 4 cysteine pairs are disulfide-bonded: Cys-30-Cys-93, Cys-37-Cys-87, Cys-38-Cys-77, and Cys-94-Cys-107.

It belongs to the fungal hydrophobin family. As to quaternary structure, self-assembles to form functional amyloid fibrils called rodlets. Self-assembly into fibrillar rodlets occurs spontaneously at hydrophobic:hydrophilic interfaces and the rodlets further associate laterally to form amphipathic monolayers.

It is found in the secreted. The protein resides in the cell wall. In terms of biological role, aerial growth, conidiation, and dispersal of filamentous fungi in the environment rely upon a capability of their secreting small amphipathic proteins called hydrophobins (HPBs) with low sequence identity. Class I can self-assemble into an outermost layer of rodlet bundles on aerial cell surfaces, conferring cellular hydrophobicity that supports fungal growth, development and dispersal; whereas Class II form highly ordered films at water-air interfaces through intermolecular interactions but contribute nothing to the rodlet structure. The sequence is that of Class I hydrophobin 21 from Pleurotus ostreatus (strain PC15) (Oyster mushroom).